Here is a 302-residue protein sequence, read N- to C-terminus: Myeloid-associated differentiation marker-like protein 2 (302 aa).

MARVEL domains lie at 13–149 and 154–298; these read AIWS…AKPG and YMAT…RLRI. Helical transmembrane passes span 45–65, 87–107, 124–144, 158–178, 191–211, 225–245, and 273–293; these read AYGT…ILIV, AYAM…PMYF, LAVS…VFLT, ASGL…GALA, WCVA…ILNI, FVVI…VIWP, and LAVT…LIYT.

This sequence belongs to the MAL family.

Its subcellular location is the membrane. The sequence is that of Myeloid-associated differentiation marker-like protein 2 (myadml2) from Xenopus laevis (African clawed frog).